We begin with the raw amino-acid sequence, 121 residues long: Cell division protein FtsB (121 aa).

Residues 1–6 (MRNWRW) are Cytoplasmic-facing. The chain crosses the membrane as a helical span at residues 7-24 (LLLVLAVLLAWLQYRFWF). At 25–121 (GPGNSGEVMM…PEPVDPVDHP (97 aa)) the chain is on the periplasmic side. A coiled-coil region spans residues 31-66 (EVMMLEAQVAHQTQDNEGLRQRNQALAAEVKDLKDG). The tract at residues 98–121 (APASAEASAPAQQAPEPVDPVDHP) is disordered. Residues 99-113 (PASAEASAPAQQAPE) show a composition bias toward low complexity.

The protein belongs to the FtsB family. Part of a complex composed of FtsB, FtsL and FtsQ.

The protein localises to the cell inner membrane. Its function is as follows. Essential cell division protein. May link together the upstream cell division proteins, which are predominantly cytoplasmic, with the downstream cell division proteins, which are predominantly periplasmic. This chain is Cell division protein FtsB, found in Xanthomonas axonopodis pv. citri (strain 306).